We begin with the raw amino-acid sequence, 324 residues long: dITP/XTP pyrophosphatase (324 aa).

Residues 1–126 (MTKSIFEYKD…SDNKSDFGDV (126 aa)) are unknown. The interval 127 to 324 (LLIATRNEGK…EVFPAWQNKQ (198 aa)) is NTP pyrophosphatase. 131-136 (TRNEGK) contacts substrate. The active-site Proton acceptor is the D193. D193 contacts Mg(2+). Residues S194, 277–280 (FGYD), K300, and 305–306 (HR) each bind substrate.

The protein belongs to the HAM1 NTPase family. In terms of assembly, homodimer. Mg(2+) is required as a cofactor.

It carries out the reaction XTP + H2O = XMP + diphosphate + H(+). The enzyme catalyses dITP + H2O = dIMP + diphosphate + H(+). It catalyses the reaction ITP + H2O = IMP + diphosphate + H(+). Its function is as follows. Pyrophosphatase that catalyzes the hydrolysis of nucleoside triphosphates to their monophosphate derivatives, with a high preference for the non-canonical purine nucleotides XTP (xanthosine triphosphate), dITP (deoxyinosine triphosphate) and ITP. Seems to function as a house-cleaning enzyme that removes non-canonical purine nucleotides from the nucleotide pool, thus preventing their incorporation into DNA/RNA and avoiding chromosomal lesions. The sequence is that of dITP/XTP pyrophosphatase from Streptococcus thermophilus (strain CNRZ 1066).